An 873-amino-acid chain; its full sequence is V-type proton ATPase 116 kDa subunit a 2 (873 aa).

The Cytoplasmic segment spans residues M1–S407. A helical transmembrane segment spans residues C408–L428. Residues R429–M445 lie on the Lumenal side of the membrane. Residues F446–I466 traverse the membrane as a helical segment. The Cytoplasmic portion of the chain corresponds to Y467 to K543. Residues M544–F564 form a helical membrane-spanning segment. N-linked (GlcNAc...) asparagine glycosylation is found at N565 and N569. The Lumenal portion of the chain corresponds to N565–D574. A helical membrane pass occupies residues I575 to L595. Residues Q596 to Q614 are Cytoplasmic-facing. Residues I615–M635 form a helical membrane-spanning segment. Over K636–Q668 the chain is Lumenal. Residues S669–G689 traverse the membrane as a helical segment. At K690–Q785 the chain is on the cytoplasmic side. The helical transmembrane segment at L786–A806 threads the bilayer. G807 is a topological domain (lumenal). The helical transmembrane segment at F808–L828 threads the bilayer. Over M829 to A873 the chain is Cytoplasmic.

It belongs to the V-ATPase 116 kDa subunit family. V-ATPase is a heteromultimeric enzyme made up of two complexes: the ATP-hydrolytic V1 complex and the proton translocation V0 complex. The V1 complex consists of three catalytic AB heterodimers that form a heterohexamer, three peripheral stalks each consisting of EG heterodimers, one central rotor including subunits D and F, and the regulatory subunits C and H. The proton translocation complex V0 consists of the proton transport subunit a, a ring of proteolipid subunits c9c'', rotary subunit d, subunits e and f, and the accessory subunits vah-19/Ac45 and vah-20/PRR. Interacts with V-type proton ATPase subunit C vha-11. As to expression, expressed in the H-shaped excretory cell (at protein level). Expressed in hypodermal cells around the vulva. Expressed in the main epidermal syncytium. Expressed in the sheath cells associated with head and tail sensory organs; specifically, expressed in the apical sheath cells of the amphids and CEP neuron and in the sheath cells of the OLQ sensory organ.

The protein localises to the apical cell membrane. It is found in the endosome. It localises to the multivesicular body membrane. Its function is as follows. Subunit of the V0 complex of vacuolar(H+)-ATPase (V-ATPase), a multisubunit enzyme composed of a peripheral complex (V1) that hydrolyzes ATP and a membrane integral complex (V0) that translocates protons. V-ATPase is responsible for acidifying and maintaining the pH of intracellular compartments and in some cell types, is targeted to the plasma membrane, where it is responsible for acidifying the extracellular environment. Involved in the assembly of the V-ATPase complex. The V-ATPase is required for the function of the excretory canal. Independently of the V1 complex, the V0 complex of the V-ATPase is required for multivesicular body membrane fusion with the apical membrane of the epidermal cells during exosome release and thus regulates the release of cuticle components such as Hedgehog-related peptide wrt-2 but not collagen. Also, in the epidermis, regulates the trafficking of che-14 and rdy-2. Regulates the secretion of granular material found in the amphid channel and in controlling osmoregulation in the amphid pocket. This is V-type proton ATPase 116 kDa subunit a 2 from Caenorhabditis elegans.